A 322-amino-acid polypeptide reads, in one-letter code: Malate dehydrogenase (322 aa).

Residues 10–15 and aspartate 34 each bind NAD(+); that span reads GSGQIG. The substrate site is built by arginine 83 and arginine 89. NAD(+) contacts are provided by residues asparagine 96 and 119–121; that span reads ITN. Substrate is bound by residues asparagine 121 and arginine 152. Histidine 176 acts as the Proton acceptor in catalysis.

This sequence belongs to the LDH/MDH superfamily. MDH type 3 family.

It carries out the reaction (S)-malate + NAD(+) = oxaloacetate + NADH + H(+). Catalyzes the reversible oxidation of malate to oxaloacetate. The sequence is that of Malate dehydrogenase from Bradyrhizobium diazoefficiens (strain JCM 10833 / BCRC 13528 / IAM 13628 / NBRC 14792 / USDA 110).